The primary structure comprises 81 residues: Photosystem I iron-sulfur center (81 aa).

2 4Fe-4S ferredoxin-type domains span residues Ala2–Trp31 and Ile39–Tyr68. [4Fe-4S] cluster contacts are provided by Cys11, Cys14, Cys17, Cys21, Cys48, Cys51, Cys54, and Cys58.

In terms of assembly, the eukaryotic PSI reaction center is composed of at least 11 subunits. [4Fe-4S] cluster serves as cofactor.

Its subcellular location is the plastid. It is found in the cyanelle thylakoid membrane. The catalysed reaction is reduced [plastocyanin] + hnu + oxidized [2Fe-2S]-[ferredoxin] = oxidized [plastocyanin] + reduced [2Fe-2S]-[ferredoxin]. In terms of biological role, apoprotein for the two 4Fe-4S centers FA and FB of photosystem I (PSI); essential for photochemical activity. FB is the terminal electron acceptor of PSI, donating electrons to ferredoxin. The C-terminus interacts with PsaA/B/D and helps assemble the protein into the PSI complex. Required for binding of PsaD and PsaE to PSI. PSI is a cytochrome c6-ferredoxin oxidoreductase, converting photonic excitation into a charge separation, which transfers an electron from the donor P700 chlorophyll pair to the spectroscopically characterized acceptors A0, A1, FX, FA and FB in turn. This chain is Photosystem I iron-sulfur center, found in Cyanophora paradoxa.